The sequence spans 184 residues: Endoribonuclease YbeY (184 aa).

Residues H118, H122, and H128 each contribute to the Zn(2+) site. The tract at residues 156–184 (YHQDRQSQKDQRLLDKSRYFDELNHGDTP) is disordered. Residues 157-184 (HQDRQSQKDQRLLDKSRYFDELNHGDTP) show a composition bias toward basic and acidic residues.

This sequence belongs to the endoribonuclease YbeY family. Zn(2+) serves as cofactor.

It localises to the cytoplasm. Single strand-specific metallo-endoribonuclease involved in late-stage 70S ribosome quality control and in maturation of the 3' terminus of the 16S rRNA. The sequence is that of Endoribonuclease YbeY from Mycolicibacterium vanbaalenii (strain DSM 7251 / JCM 13017 / BCRC 16820 / KCTC 9966 / NRRL B-24157 / PYR-1) (Mycobacterium vanbaalenii).